Consider the following 179-residue polypeptide: Small ribosomal subunit protein uS7 (179 aa).

This sequence belongs to the universal ribosomal protein uS7 family. In terms of assembly, part of the 30S ribosomal subunit. Contacts proteins S9 and S11.

Its function is as follows. One of the primary rRNA binding proteins, it binds directly to 16S rRNA where it nucleates assembly of the head domain of the 30S subunit. Is located at the subunit interface close to the decoding center, probably blocks exit of the E-site tRNA. This is Small ribosomal subunit protein uS7 from Shigella flexneri serotype 5b (strain 8401).